Consider the following 283-residue polypeptide: Nucleoid occlusion protein (283 aa).

Residues 142–161 (ESLAQRLGKGQSTIANKLRL) constitute a DNA-binding region (H-T-H motif).

It belongs to the ParB family.

It localises to the cytoplasm. The protein localises to the nucleoid. Effects nucleoid occlusion by binding relatively nonspecifically to DNA and preventing the assembly of the division machinery in the vicinity of the nucleoid, especially under conditions that disturb the cell cycle. It helps to coordinate cell division and chromosome segregation by preventing the formation of the Z ring through the nucleoid, which would cause chromosome breakage. The polypeptide is Nucleoid occlusion protein (Shouchella clausii (strain KSM-K16) (Alkalihalobacillus clausii)).